Here is a 456-residue protein sequence, read N- to C-terminus: N(6)-adenosine-methyltransferase non-catalytic subunit METTL14 (456 aa).

Residues 39–51 are compositionally biased toward basic and acidic residues; that stretch reads DEQREIAETRETS. Residues 39 to 74 are disordered; it reads DEQREIAETRETSRASYDTSATVSKRKMPEEGEADE. A compositionally biased stretch (polar residues) spans 52–61; sequence RASYDTSATV. Interaction with METTL3 regions lie at residues 135-136 and 237-238; these read RD and SG. Residues 245–254 form a positively charged region required for RNA-binding region; sequence RMCLRKWGFR. 2 interaction with METTL3 regions span residues 255–258 and 278–287; these read RSED and KAIFQRTKEH. The positively charged region required for RNA-binding stretch occupies residues 297–298; it reads HR. The interaction with METTL3 stretch occupies residues 308–312; the sequence is NVDID. Positions 395–456 are disordered; it reads LRPKTPPPKS…GPHRGVFAPR (62 aa). Gly residues predominate over residues 410-421; it reads ASRGGGRGGPSA. Positions 423-441 are enriched in basic and acidic residues; it reads RGERGRERNRGSFRGDRGN.

It belongs to the MT-A70-like family. As to quaternary structure, heterodimer; heterodimerizes with mettl3 to form an antiparallel heterodimer that constitutes an active methyltransferase. Component of the WMM complex, a N6-methyltransferase complex composed of a catalytic subcomplex, named MAC, and of an associated subcomplex, named MACOM. The MAC subcomplex is composed of mettl3 and mettl14.

The protein resides in the nucleus. Functionally, the METTL3-METTL14 heterodimer forms a N6-methyltransferase complex that methylates adenosine residues at the N(6) position of some mRNAs and regulates the circadian clock, differentiation of embryonic stem cells and cortical neurogenesis. In the heterodimer formed with mettl3, mettl14 constitutes the RNA-binding scaffold that recognizes the substrate rather than the catalytic core. N6-methyladenosine (m6A), which takes place at the 5'-[AG]GAC-3' consensus sites of some mRNAs, plays a role in mRNA stability and processing. The polypeptide is N(6)-adenosine-methyltransferase non-catalytic subunit METTL14 (mettl14) (Xenopus tropicalis (Western clawed frog)).